The sequence spans 132 residues: Small ribosomal subunit protein eS12 (132 aa).

N-acetylalanine is present on alanine 2. An N6-succinyllysine modification is found at lysine 129.

Belongs to the eukaryotic ribosomal protein eS12 family. In terms of assembly, part of the small subunit (SSU) processome, composed of more than 70 proteins and the RNA chaperone small nucleolar RNA (snoRNA) U3. Subunit of the 40S ribosomal complex.

It is found in the nucleus. It localises to the nucleolus. Its function is as follows. Part of the small subunit (SSU) processome, first precursor of the small eukaryotic ribosomal subunit. During the assembly of the SSU processome in the nucleolus, many ribosome biogenesis factors, an RNA chaperone and ribosomal proteins associate with the nascent pre-rRNA and work in concert to generate RNA folding, modifications, rearrangements and cleavage as well as targeted degradation of pre-ribosomal RNA by the RNA exosome. Subunit of the 40S ribosomal complex. This is Small ribosomal subunit protein eS12 (Rps12) from Rattus norvegicus (Rat).